The chain runs to 497 residues: Probable cytosol aminopeptidase (497 aa).

Residues lysine 267 and aspartate 272 each contribute to the Mn(2+) site. The active site involves lysine 279. Positions 290, 349, and 351 each coordinate Mn(2+). The active site involves arginine 353.

Belongs to the peptidase M17 family. It depends on Mn(2+) as a cofactor.

Its subcellular location is the cytoplasm. It carries out the reaction Release of an N-terminal amino acid, Xaa-|-Yaa-, in which Xaa is preferably Leu, but may be other amino acids including Pro although not Arg or Lys, and Yaa may be Pro. Amino acid amides and methyl esters are also readily hydrolyzed, but rates on arylamides are exceedingly low.. The catalysed reaction is Release of an N-terminal amino acid, preferentially leucine, but not glutamic or aspartic acids.. Presumably involved in the processing and regular turnover of intracellular proteins. Catalyzes the removal of unsubstituted N-terminal amino acids from various peptides. In Pseudomonas putida (strain ATCC 47054 / DSM 6125 / CFBP 8728 / NCIMB 11950 / KT2440), this protein is Probable cytosol aminopeptidase.